Consider the following 747-residue polypeptide: MANTRVDHLLNTLEELLPYELEKFKFKLHTTSLEKGHSRIPLSLVKMARPIKLTRLLLTYYGEEYAVRLTLQILRATNQRQLAEELHKATGPEHLTEENGVGGSVQSSAENKDKGVKGSDVPGEDEAQQNDDESDILPPIQAEVGKGPQKKSLAKRKDQRGPESLDSQTKPGARSAAPLYRRTLVTQSPGDKENRAGAQPQECQLCREAARSTAMSQGGERSRRLKCICLQERSDPGVLKLPLTQKKENPQIQKLFRLKRKQEMAVSFVREATLNGRTTGTLEKGVGIPEHSMMLDEETSRNMSSKISLTREKRCTASWTENGNGGPETPETLGETVSSILCDSCSPKVLLSLGEKLAQTPEDPASLGQAASKGRSRDKVACPLCHTQGELPAKACVQSSCSCSVAPGDPKASGRHSICFQCQSSRAGKSCEAQSPQFLPQCPRHMKQVQLLFCEDHREPICLICRLSQEHQGHRVRPIEEAALQYKEQIRKQLERLREMRGYVEEHKLPADKKAEDFLKQTETQKQRISCPLEKLFQFLEQQEQLFVTWLQELVQTIGKVRETYYTQVSLLDKLIGELEAKQDQPEWELMQDIGATLHRAETMTASELLGIPPGVKEKLHLLYQKSKSAEKNMQRFSEMLGSEMAFSASDVATREGCRPSTTKAQALIPTVHLKCDGAHTQDFDVILCAELEAGGSEPQDYLHPSSAQDTPELHEIHSQNNKRKFKSFLKWKPSFSRTDRCLRTCW.

The region spanning 1 to 92 (MANTRVDHLL…AEELHKATGP (92 aa)) is the Pyrin domain. The disordered stretch occupies residues 89–181 (ATGPEHLTEE…GARSAAPLYR (93 aa)). Residues 122–135 (PGEDEAQQNDDESD) are compositionally biased toward acidic residues. The Zn(2+) site is built by C442, H445, C465, and H471. A B box-type zinc finger spans residues 442–479 (CPRHMKQVQLLFCEDHREPICLICRLSQEHQGHRVRPI). Residues 479–508 (IEEAALQYKEQIRKQLERLREMRGYVEEHK) adopt a coiled-coil conformation. Residues 487–645 (KEQIRKQLER…RFSEMLGSEM (159 aa)) form a required for homotrimerization and induction of pyroptosomes region. Residues 698–720 (EPQDYLHPSSAQDTPELHEIHSQ) form a disordered region.

In terms of assembly, homotrimer. Interacts (via the B box-type zinc finger) with PSTPIP1. Interacts (via the B30.2/SPRY domain) with several components of the inflammasome complex, including CASP1 p20 and p10 subunits, CASP5, PYCARD, NLRP1, NLRP2 and NLRP3, as well as with unprocessed IL1B; this interaction may lead to autophagic degradation of these proteins. Component of the AIM2 PANoptosome complex, a multiprotein complex that drives inflammatory cell death (PANoptosis). Interacts with NFKBIA and RELA. Interacts weakly with VASP and ACTR3. Interacts with active ULK1 (phosphorylated on 'Ser-317') and BECN1 simultaneously. Also interacts with ATG16L1 (via WD repeats), and with ATG8 family members, including GABARAP, GABARAPL1 and, to a lesser extent, GABARAPL2, MAP1LC3A/LC3A and MAP1LC3C/LC3C. Interacts with TRIM21. Interacts with YWHAB, YWHAE, YWHAG, YWHAH, YWHAQ and YWHAZ; the interaction is required for the down-regulation of pyrin pro-inflammatory activity. In terms of processing, degraded along with the delivery of its substrates to autolysosomal compartments (at protein level). In terms of tissue distribution, expressed in spleen and, to a lesser degree in the lung. Not expressed in thymus, testis, ovary, heart, brain, liver, kidney and muscle.

Its subcellular location is the cytoplasm. It is found in the cytoskeleton. The protein localises to the cell projection. The protein resides in the ruffle. It localises to the lamellipodium. Its subcellular location is the cytoplasmic vesicle. It is found in the autophagosome. The protein localises to the nucleus. Involved in the regulation of innate immunity and the inflammatory response in response to IFNG/IFN-gamma. Organizes autophagic machinery by serving as a platform for the assembly of ULK1, Beclin 1/BECN1, ATG16L1, and ATG8 family members and recognizes specific autophagy targets, thus coordinating target recognition with assembly of the autophagic apparatus and initiation of autophagy. Acts as an autophagy receptor for the degradation of several inflammasome components, including CASP1, NLRP1 and NLRP3, hence preventing excessive IL1B- and IL18-mediated inflammation. However, it can also have a positive effect in the inflammatory pathway, acting as an innate immune sensor that triggers PYCARD/ASC specks formation, caspase-1 activation, and IL1B and IL18 production. Together with AIM2, also acts as a mediator of pyroptosis, necroptosis and apoptosis (PANoptosis), an integral part of host defense against pathogens, in response to bacterial infection. It is required for PSTPIP1-induced PYCARD/ASC oligomerization and inflammasome formation. Recruits PSTPIP1 to inflammasomes, and is required for PSTPIP1 oligomerization. The sequence is that of Pyrin from Rattus norvegicus (Rat).